The primary structure comprises 159 residues: SsrA-binding protein (159 aa).

Belongs to the SmpB family.

The protein localises to the cytoplasm. Required for rescue of stalled ribosomes mediated by trans-translation. Binds to transfer-messenger RNA (tmRNA), required for stable association of tmRNA with ribosomes. tmRNA and SmpB together mimic tRNA shape, replacing the anticodon stem-loop with SmpB. tmRNA is encoded by the ssrA gene; the 2 termini fold to resemble tRNA(Ala) and it encodes a 'tag peptide', a short internal open reading frame. During trans-translation Ala-aminoacylated tmRNA acts like a tRNA, entering the A-site of stalled ribosomes, displacing the stalled mRNA. The ribosome then switches to translate the ORF on the tmRNA; the nascent peptide is terminated with the 'tag peptide' encoded by the tmRNA and targeted for degradation. The ribosome is freed to recommence translation, which seems to be the essential function of trans-translation. This Actinobacillus pleuropneumoniae serotype 5b (strain L20) protein is SsrA-binding protein.